The following is a 210-amino-acid chain: HTH-type transcriptional repressor FabR (210 aa).

The 61-residue stretch at 10–70 (KTRRSLVEAA…TMVDESGLML (61 aa)) folds into the HTH tetR-type domain. A DNA-binding region (H-T-H motif) is located at residues 33-52 (SLREVAREAGIAPTSFYRHF).

In terms of assembly, homodimer.

It is found in the cytoplasm. Represses the transcription of fabB, involved in unsaturated fatty acid (UFA) biosynthesis. By controlling UFA production, FabR directly influences the physical properties of the membrane bilayer. In Salmonella arizonae (strain ATCC BAA-731 / CDC346-86 / RSK2980), this protein is HTH-type transcriptional repressor FabR.